A 131-amino-acid polypeptide reads, in one-letter code: Mesogenin-1 (131 aa).

A disordered region spans residues 22-79 (EDRSFGDSASSPESESFDSACSSPDARSSPTAGCEHAEQQKPKVKMSMRRRMKASERE). Residues 27–45 (GDSASSPESESFDSACSSP) show a composition bias toward low complexity. The segment covering 63–73 (PKVKMSMRRRM) has biased composition (basic residues). Residues 70–124 (RRRMKASEREKLRMRSLAEALHQLRDYLPPGYSRRGQPLTKIQTLKYTIQYIKEL) form the bHLH domain.

Coexpression of ntl and spt is required for expression.

It is found in the nucleus. In terms of biological role, involved in specifying the paraxial, but not dorsal, mesoderm. May regulate the expression of T-box transcription factors required for mesoderm formation and differentiation. The sequence is that of Mesogenin-1 (msgn1) from Danio rerio (Zebrafish).